The chain runs to 419 residues: MKTYLVGGALRDRLLGRPVSDHDWLVVGATPEEMAARGYLPVGRDFPVFLHPQTREEYALARTERKSAPGYRGFTVHASPDVTLEQDLARRDLTVNAIALPAEFVGTDGRFEPDAGKLADPFHGRRDLEHKLLRHVTDAFREDPVRILRVARFAARFDDFSVAPETMALMREMVQAGEADALVPERVWQELSRGLMETRPSRMFEVLRACGALAVLLPEVDRLWGVPQPEAHHPEVDCGVHLMMVIDTSAKLQASLPVRFACLMHDLGKGTTEPGLLPRHIGHEKRSAELLHAVCDRWRVPVEIRELAEVVAREHGNIHRSGELAAAALVRLLERCDAFRKPARFADVLLACECDARGRLGFEDRPYPQRERLLAVLATAAGVPTEAVARAAQQSGAAGPQIGEAIHRARVEAVAALPG.

ATP-binding residues include Gly8 and Arg11. CTP is bound by residues Gly8 and Arg11. Mg(2+) is bound by residues Asp21 and Asp23. The ATP site is built by Arg91, Arg149, and Arg152. Residues Arg91, Arg149, and Arg152 each contribute to the CTP site. Residues 238–339 (CGVHLMMVID…VRLLERCDAF (102 aa)) enclose the HD domain.

This sequence belongs to the tRNA nucleotidyltransferase/poly(A) polymerase family. Bacterial CCA-adding enzyme type 1 subfamily. In terms of assembly, monomer. Can also form homodimers and oligomers. It depends on Mg(2+) as a cofactor. Requires Ni(2+) as cofactor.

The enzyme catalyses a tRNA precursor + 2 CTP + ATP = a tRNA with a 3' CCA end + 3 diphosphate. It catalyses the reaction a tRNA with a 3' CCA end + 2 CTP + ATP = a tRNA with a 3' CCACCA end + 3 diphosphate. Functionally, catalyzes the addition and repair of the essential 3'-terminal CCA sequence in tRNAs without using a nucleic acid template. Adds these three nucleotides in the order of C, C, and A to the tRNA nucleotide-73, using CTP and ATP as substrates and producing inorganic pyrophosphate. tRNA 3'-terminal CCA addition is required both for tRNA processing and repair. Also involved in tRNA surveillance by mediating tandem CCA addition to generate a CCACCA at the 3' terminus of unstable tRNAs. While stable tRNAs receive only 3'-terminal CCA, unstable tRNAs are marked with CCACCA and rapidly degraded. This chain is Multifunctional CCA protein, found in Variovorax paradoxus (strain S110).